The following is a 464-amino-acid chain: Soluble pyridine nucleotide transhydrogenase (464 aa).

Residue 35–44 participates in FAD binding; that stretch reads DSRRQVGGNC.

It belongs to the class-I pyridine nucleotide-disulfide oxidoreductase family. It depends on FAD as a cofactor.

Its subcellular location is the cytoplasm. It catalyses the reaction NAD(+) + NADPH = NADH + NADP(+). Conversion of NADPH, generated by peripheral catabolic pathways, to NADH, which can enter the respiratory chain for energy generation. The chain is Soluble pyridine nucleotide transhydrogenase from Pseudomonas fluorescens (strain Pf0-1).